Consider the following 321-residue polypeptide: Fe-S cluster assembly protein DRE2 (321 aa).

Residues 1–131 (MERMLLLSPP…KPDFGPENIV (131 aa)) are N-terminal SAM-like domain. A linker region spans residues 132–213 (PLKLGKRKPV…EETLLDGEDM (82 aa)). [2Fe-2S] cluster contacts are provided by C223, C234, C237, and C239. The fe-S binding site A stretch occupies residues 223–239 (CRPKAGKRRRACKDCTC). Residues C284, C287, C295, and C298 each contribute to the [4Fe-4S] cluster site. Short sequence motifs (cx2C motif) lie at residues 284–287 (CGNC) and 295–298 (CDGC). Residues 284-298 (CGNCALGDAFRCDGC) form a fe-S binding site B region.

Belongs to the anamorsin family. In terms of assembly, monomer. Interacts with TAH18. Interacts with MIA40. [2Fe-2S] cluster serves as cofactor. The cofactor is [4Fe-4S] cluster.

It is found in the cytoplasm. The protein resides in the mitochondrion intermembrane space. Functionally, component of the cytosolic iron-sulfur (Fe-S) protein assembly (CIA) machinery required for the maturation of extramitochondrial Fe-S proteins. Part of an electron transfer chain functioning in an early step of cytosolic Fe-S biogenesis, facilitating the de novo assembly of a [4Fe-4S] cluster on the scaffold complex CFD1-NBP35. Electrons are transferred to DRE2 from NADPH via the FAD- and FMN-containing protein TAH18. TAH18-DRE2 are also required for the assembly of the diferric tyrosyl radical cofactor of ribonucleotide reductase (RNR), probably by providing electrons for reduction during radical cofactor maturation in the catalytic small subunit RNR2. The protein is Fe-S cluster assembly protein DRE2 of Coccidioides immitis (strain RS) (Valley fever fungus).